A 125-amino-acid polypeptide reads, in one-letter code: Large ribosomal subunit protein mL51 (125 aa).

A mitochondrion-targeting transit peptide spans 1 to 29; the sequence is MWSVQKLLWGCRSLLPQGCRSFSLGNRDL.

This sequence belongs to the mitochondrion-specific ribosomal protein mL51 family. As to quaternary structure, component of the mitochondrial ribosome large subunit (39S) which comprises a 16S rRNA and about 50 distinct proteins.

It is found in the mitochondrion. This chain is Large ribosomal subunit protein mL51 (mrpl51), found in Xenopus laevis (African clawed frog).